The chain runs to 260 residues: Snake venom serine protease pallabin-2 (260 aa).

The first 18 residues, 1–18 (MVLIKVLANLLILQLSYA), serve as a signal peptide directing secretion. Residues 19–24 (QKSSEL) constitute a propeptide that is removed on maturation. The Peptidase S1 domain maps to 25–251 (IIGGDECNIN…HLDWIENIIA (227 aa)). Disulfide bonds link Cys31/Cys163, Cys50/Cys66, Cys98/Cys258, Cys142/Cys212, Cys174/Cys191, and Cys202/Cys227. Residue His65 is the Charge relay system of the active site. N-linked (GlcNAc...) asparagine glycosylation is present at Asn103. The active-site Charge relay system is Asp110. Ser206 functions as the Charge relay system in the catalytic mechanism.

The protein belongs to the peptidase S1 family. Snake venom subfamily. As to quaternary structure, monomer. In terms of tissue distribution, expressed by the venom gland.

The protein resides in the secreted. Its function is as follows. Snake venom serine protease that may act in the hemostasis system of the prey. The polypeptide is Snake venom serine protease pallabin-2 (JZTHR7) (Gloydius halys (Chinese water mocassin)).